A 148-amino-acid polypeptide reads, in one-letter code: uncharacterized protein (148 aa).

The protein to A.tumefaciens Atu0565/AGR_C_992.

This is an uncharacterized protein from Rhizobium meliloti (strain 1021) (Ensifer meliloti).